A 93-amino-acid chain; its full sequence is Late embryogenesis abundant protein B19.1A (93 aa).

The disordered stretch occupies residues 1–93; sequence MASGQQERSQ…IDESKFKTKS (93 aa). Composition is skewed to basic and acidic residues over residues 9–19 and 73–93; these read SQLDRKAREGE and GGER…KTKS.

The protein belongs to the small hydrophilic plant seed protein family. In terms of tissue distribution, embryos and young seedlings.

In terms of biological role, lea proteins are late embryonic proteins abundant in higher plant seed embryos. It may have a role in desiccation tolerance by acting as an osmoprotective protein or as a desiccation-damage repair protein. The protein is Late embryogenesis abundant protein B19.1A (B19.1A) of Hordeum vulgare (Barley).